Reading from the N-terminus, the 248-residue chain is Malonyl-[acyl-carrier protein] O-methyltransferase 2 (248 aa).

The protein belongs to the methyltransferase superfamily.

The catalysed reaction is malonyl-[ACP] + S-adenosyl-L-methionine = malonyl-[ACP] methyl ester + S-adenosyl-L-homocysteine. It participates in cofactor biosynthesis; biotin biosynthesis. Functionally, converts the free carboxyl group of a malonyl-thioester to its methyl ester by transfer of a methyl group from S-adenosyl-L-methionine (SAM). It allows to synthesize pimeloyl-ACP via the fatty acid synthetic pathway. The chain is Malonyl-[acyl-carrier protein] O-methyltransferase 2 from Coxiella burnetii (strain RSA 493 / Nine Mile phase I).